Reading from the N-terminus, the 500-residue chain is Kynurenine 3-monooxygenase (500 aa).

Belongs to the aromatic-ring hydroxylase family. KMO subfamily. Requires FAD as cofactor.

It localises to the mitochondrion outer membrane. It carries out the reaction L-kynurenine + NADPH + O2 + H(+) = 3-hydroxy-L-kynurenine + NADP(+) + H2O. Its pathway is cofactor biosynthesis; NAD(+) biosynthesis; quinolinate from L-kynurenine: step 1/3. Functionally, catalyzes the hydroxylation of L-kynurenine (L-Kyn) to form 3-hydroxy-L-kynurenine (L-3OHKyn). Required for synthesis of quinolinic acid. The chain is Kynurenine 3-monooxygenase (bna4) from Aspergillus terreus (strain NIH 2624 / FGSC A1156).